The following is a 387-amino-acid chain: Trichocyst matrix protein T2-C (387 aa).

The signal sequence occupies residues Met-1–Ala-19. Positions Asp-20–Gly-48 are excised as a propeptide. A coiled-coil region spans residues Leu-51–Ala-163. Residues Lys-184–Gln-239 constitute a propeptide that is removed on maturation. A coiled-coil region spans residues Thr-294–Asp-333.

Belongs to the TMP family. Two components are produced by post-translational processing from the precursor peptide.

The protein localises to the trichocyst. Functionally, structural protein that crystallize inside the trichocyst matrix. The sequence is that of Trichocyst matrix protein T2-C (T2C) from Paramecium tetraurelia.